The primary structure comprises 68 residues: UPF0253 protein VFMJ11_0680 (68 aa).

Belongs to the UPF0253 family.

This chain is UPF0253 protein VFMJ11_0680, found in Aliivibrio fischeri (strain MJ11) (Vibrio fischeri).